Consider the following 366-residue polypeptide: L-Ala-D/L-Glu epimerase (366 aa).

Substrate-binding residues include Arg-24, Thr-135, and Lys-160. Catalysis depends on Lys-162, which acts as the Proton acceptor; specific for (R)-substrate epimerization. 3 residues coordinate Mg(2+): Asp-191, Glu-219, and Asp-244. The active-site Proton acceptor; specific for (S)-substrate epimerization is Lys-268. Substrate-binding residues include Ser-296, Ile-298, Asp-321, and Asp-323.

Belongs to the mandelate racemase/muconate lactonizing enzyme family. In terms of assembly, homooctamer; tetramer of dimers. Mg(2+) serves as cofactor.

It catalyses the reaction L-alanyl-L-glutamate = L-alanyl-D-glutamate. The protein operates within cell wall degradation; peptidoglycan degradation. In terms of biological role, catalyzes the epimerization of L-Ala-D-Glu to L-Ala-L-Glu and has probably a role in the metabolism of the murein peptide, of which L-Ala-D-Glu is a component. Is also able to catalyze the reverse reaction and the epimerization of the other Ala-X dipeptides L-Ala-L-Asp, L-Ala-L-Leu, L-Ala-L-Met, and L-Ala-L-Ser. Is not able to epimerize other L-Ala-X dipeptides. Is also active with L-Ser-L-Glu and, oddly, L-Pro-L-Glu, but not with L-Glu-L-Glu, L-Lys-L-Glu, L-Lys-L-Ala, or D-Ala-D-Ala. In Bacillus subtilis (strain 168), this protein is L-Ala-D/L-Glu epimerase (ykfB).